The chain runs to 296 residues: Prostate androgen-regulated mucin-like protein 1 homolog (296 aa).

The first 20 residues, 1–20 (MVCKALITLCIFAAGLRVQG), serve as a signal peptide directing secretion. Topologically, residues 21 to 244 (SPTPTLLPVS…EVENALSSGS (224 aa)) are extracellular. N-linked (GlcNAc...) asparagine glycosylation is found at N62, N96, and N108. A disordered region spans residues 73 to 220 (LTSQLPTHPR…SPQDTEPGKV (148 aa)). The span at 80 to 96 (HPREEAVTSPPLKREVN) shows a compositional bias: basic and acidic residues. The segment covering 97-111 (STDSSPTGFSSNSSG) has biased composition (low complexity). Over residues 125-145 (SPETSVPATGSQSPTLLFSQG) the composition is skewed to polar residues. 2 stretches are compositionally biased toward low complexity: residues 146–175 (PTSA…TVNN) and 195–205 (SHTPTSHVTEP). N-linked (GlcNAc...) asparagine glycosylation occurs at N168. The segment covering 206–217 (VPKEKSPQDTEP) has biased composition (basic and acidic residues). A helical transmembrane segment spans residues 245 to 265 (IAAITVTVIAVVLLVFGAAAY). The Cytoplasmic segment spans residues 266–296 (LKIRHSSYGRLLDDHDYGSWGNYNNPLYDDS). S284 carries the phosphoserine modification.

It belongs to the PARM family. Post-translationally, highly N-glycosylated and O-glycosylated. Expressed in prostate. Detected in other organs at low levels, these include the heart and various tissues of the urogenital tract. Not detected in mammary gland.

The protein resides in the cell membrane. The protein localises to the golgi apparatus membrane. Its subcellular location is the endosome membrane. May regulate TLP1 expression and telomerase activity, thus enabling certain prostatic cells to resist apoptosis. This chain is Prostate androgen-regulated mucin-like protein 1 homolog (Parm1), found in Rattus norvegicus (Rat).